We begin with the raw amino-acid sequence, 201 residues long: Holliday junction branch migration complex subunit RuvA (201 aa).

Positions Met1–Ala63 are domain I. The tract at residues Asp64–Gly142 is domain II. Residues Gly143 to Asn153 are flexible linker. The interval Asn153–Leu201 is domain III.

Belongs to the RuvA family. As to quaternary structure, homotetramer. Forms an RuvA(8)-RuvB(12)-Holliday junction (HJ) complex. HJ DNA is sandwiched between 2 RuvA tetramers; dsDNA enters through RuvA and exits via RuvB. An RuvB hexamer assembles on each DNA strand where it exits the tetramer. Each RuvB hexamer is contacted by two RuvA subunits (via domain III) on 2 adjacent RuvB subunits; this complex drives branch migration. In the full resolvosome a probable DNA-RuvA(4)-RuvB(12)-RuvC(2) complex forms which resolves the HJ.

It localises to the cytoplasm. In terms of biological role, the RuvA-RuvB-RuvC complex processes Holliday junction (HJ) DNA during genetic recombination and DNA repair, while the RuvA-RuvB complex plays an important role in the rescue of blocked DNA replication forks via replication fork reversal (RFR). RuvA specifically binds to HJ cruciform DNA, conferring on it an open structure. The RuvB hexamer acts as an ATP-dependent pump, pulling dsDNA into and through the RuvAB complex. HJ branch migration allows RuvC to scan DNA until it finds its consensus sequence, where it cleaves and resolves the cruciform DNA. The sequence is that of Holliday junction branch migration complex subunit RuvA from Bacteroides fragilis (strain ATCC 25285 / DSM 2151 / CCUG 4856 / JCM 11019 / LMG 10263 / NCTC 9343 / Onslow / VPI 2553 / EN-2).